Consider the following 201-residue polypeptide: Large ribosomal subunit protein uL4 (201 aa).

Residues 45–71 (AQKTRAEVTGSGKKPWRQKGTGRARAG) form a disordered region.

This sequence belongs to the universal ribosomal protein uL4 family. In terms of assembly, part of the 50S ribosomal subunit.

In terms of biological role, one of the primary rRNA binding proteins, this protein initially binds near the 5'-end of the 23S rRNA. It is important during the early stages of 50S assembly. It makes multiple contacts with different domains of the 23S rRNA in the assembled 50S subunit and ribosome. Its function is as follows. Forms part of the polypeptide exit tunnel. The sequence is that of Large ribosomal subunit protein uL4 from Shewanella sp. (strain MR-4).